The following is an 886-amino-acid chain: uncharacterized protein (886 aa).

An N-terminal signal peptide occupies residues 1 to 20 (MKIIKSLILLVLFMASPAKG). The next 5 helical transmembrane spans lie at 520–540 (VTIFGLMFVLGALKLTAVEVV), 609–629 (LLFIQLLQIHNGLAFIVIITI), 647–667 (VIAFIGLTVMISLAPFFIILM), 680–700 (ISILFSYVVQPTILLIFFLLI), and 779–799 (LLFYSYCLMSYGLVSFVTIVV). A disordered region spans residues 856 to 886 (EARKPQGGGEHTGKFFQNRNDVKPEQTERND). Positions 875-886 (NDVKPEQTERND) are enriched in basic and acidic residues.

Belongs to the TrbL/VirB6 family.

Its subcellular location is the cell membrane. This is an uncharacterized protein from Rickettsia bellii (strain RML369-C).